The chain runs to 364 residues: Fructose-bisphosphate aldolase C (364 aa).

Tyrosine 5 carries the post-translational modification Phosphotyrosine. 3 positions are modified to phosphoserine: serine 36, serine 39, and serine 45. Residue arginine 56 participates in substrate binding. Position 111 is an N6-acetyllysine (lysine 111). Residue serine 132 is modified to Phosphoserine. Lysine 147 contacts substrate. Glutamate 188 serves as the catalytic Proton acceptor. Lysine 230 serves as the catalytic Schiff-base intermediate with dihydroxyacetone-P.

It belongs to the class I fructose-bisphosphate aldolase family. In terms of assembly, homotetramer. Interacts with ATP6V1E1.

The catalysed reaction is beta-D-fructose 1,6-bisphosphate = D-glyceraldehyde 3-phosphate + dihydroxyacetone phosphate. It functions in the pathway carbohydrate degradation; glycolysis; D-glyceraldehyde 3-phosphate and glycerone phosphate from D-glucose: step 4/4. The polypeptide is Fructose-bisphosphate aldolase C (ALDOC) (Pan troglodytes (Chimpanzee)).